A 629-amino-acid chain; its full sequence is Acetylcholinesterase (629 aa).

The N-terminal stretch at 1-38 (MGQLSILCLFVTVCASVCGYSWPSDETTTKPSQFKDFH) is a signal peptide. An intrachain disulfide couples Cys-103 to Cys-130. The N-linked (GlcNAc...) asparagine glycan is linked to Asn-125. The Acyl-ester intermediate role is filled by Ser-253. The cysteines at positions 307 and 322 are disulfide-linked. Asn-308 is a glycosylation site (N-linked (GlcNAc...) asparagine). Glu-382 functions as the Charge relay system in the catalytic mechanism. Asn-418 carries an N-linked (GlcNAc...) asparagine glycan. A disulfide bond links Cys-458 and Cys-574. The Charge relay system role is filled by His-496. The N-linked (GlcNAc...) asparagine glycan is linked to Asn-509. The GPI-anchor amidated serine moiety is linked to residue Ser-605. The propeptide at 606–629 (SSNELLPPSTSLVLIWIMTLLNAL) is removed in mature form.

It belongs to the type-B carboxylesterase/lipase family. In terms of assembly, homodimer; disulfide-linked. Post-translationally, the N-terminus is blocked.

The protein localises to the synapse. Its subcellular location is the cell membrane. The catalysed reaction is acetylcholine + H2O = choline + acetate + H(+). In terms of biological role, rapidly hydrolyzes choline released into the synapse. The polypeptide is Acetylcholinesterase (Leptinotarsa decemlineata (Colorado potato beetle)).